Here is a 490-residue protein sequence, read N- to C-terminus: Auxin transporter-like protein 5 (490 aa).

Over 1–55 (MEMANDKVAETVIVGNYVEMESEGKPPQDIKSKLSNFLWHGGSAYDAWFSCASNQ) the chain is Cytoplasmic. A helical membrane pass occupies residues 56–73 (VAQVLLTLPYSFSQLGML). At 74–75 (SG) the chain is on the extracellular side. Residues 76-96 (ILFQLFYGILGSWTAYLISIL) traverse the membrane as a helical segment. At 97 to 132 (YVEYRTRKEREKVNFRSHVIQWFEVLDGLLGKHWRN) the chain is on the cytoplasmic side. The helical transmembrane segment at 133–153 (VGLGFNCTFLLFGSVIQLIAC) threads the bilayer. At 154 to 168 (ASNIYYINDNLDKRT) the chain is on the extracellular side. The helical transmembrane segment at 169–189 (WTYIFGACCATTVFIPSFHNY) threads the bilayer. Arg-190 is a topological domain (cytoplasmic). The helical transmembrane segment at 191–211 (IWSFLGLVMTTYTAWYLTIAA) threads the bilayer. At 212–227 (VLHGQVEGVKHSGPNK) the chain is on the extracellular side. The chain crosses the membrane as a helical span at residues 228 to 248 (IILYFTGATNILYTFGGHAVT). Residues 249 to 262 (VEIMHAMWKPQKFK) are Cytoplasmic-facing. The helical transmembrane segment at 263–283 (AIYLLATLYVLTLTIPSATAV) threads the bilayer. Residues 284–310 (YWAFGDMLLNHSNAFALLPKSPFRDMA) lie on the Extracellular side of the membrane. Asn-293 carries an N-linked (GlcNAc...) asparagine glycan. Residues 311 to 331 (VILMLIHQFITFGFACTPLYF) traverse the membrane as a helical segment. Residues 332–352 (VWEKTVGMHECKSLCKRALVR) are Cytoplasmic-facing. The chain crosses the membrane as a helical span at residues 353–373 (LPVVIPIWFLAIIFPFFGPIN). Residues 374–376 (STV) are Extracellular-facing. The chain crosses the membrane as a helical span at residues 377 to 397 (GSLLVSFTVYIIPALAHIFTF). The Cytoplasmic portion of the chain corresponds to 398–420 (KSSSARQNAVEQPPKFVGRWVGT). A helical transmembrane segment spans residues 421-441 (FVINVFIVVWVLIVGFGFGGW). At 442-490 (ASMVNFVHQIDTFGLFTKCYQCPPPTPSVPTMPPHQMNATAPSPHHHHH) the chain is on the extracellular side. Residue Asn-479 is glycosylated (N-linked (GlcNAc...) asparagine).

This sequence belongs to the amino acid/polyamine transporter 2 family. Amino acid/auxin permease (AAAP) (TC 2.A.18.1) subfamily. In terms of tissue distribution, shoots and roots of nodulating plants, at low levels.

The protein resides in the cell membrane. Functionally, carrier protein involved in proton-driven auxin influx. Mediates the formation of auxin gradient from developing leaves (site of auxin biosynthesis) to tips by contributing to the loading of auxin in vascular tissues and facilitating acropetal (base to tip) auxin transport within inner tissues of the root apex, and basipetal (tip to base) auxin transport within outer tissues of the root apex. May be involved in lateral roots and nodules formation. This chain is Auxin transporter-like protein 5 (LAX5), found in Medicago truncatula (Barrel medic).